A 292-amino-acid polypeptide reads, in one-letter code: Short chain dehydrogenase/reductase CPUR_05418 (292 aa).

Residues Ile-44 and Arg-156 each coordinate NADP(+). Active-site proton donor residues include Ser-172 and Tyr-186. Positions 186, 190, 221, and 223 each coordinate NADP(+). The active-site Lowers pKa of active site Tyr is Lys-190.

It belongs to the short-chain dehydrogenases/reductases (SDR) family.

It functions in the pathway secondary metabolite biosynthesis. Short chain dehydrogenase/reductase; part of the ergochrome gene cluster responsible for the typical purple-black color of the ergot sclerotia. The ergochrome gene cluster produces several ergot pigments including the yellow ergochrome secalonic acid and its derivatives, as well as the red anthraquinones endocrocin and clavorubin. The pathway begins with the synthesis of atrochrysone thioester by the polyketide synthase (PKS) CPUR_05437. The atrochrysone carboxyl ACP thioesterase CPUR_05436 then breaks the thioester bond and releases the atrochrysone carboxylic acid from CPUR_05437. The atrochrysone carboxylic acid is then converted to atrochrysone which is further transformed into emodin anthrone. The next step is performed by the anthrone oxygenase CPUR_05434 that catalyzes the oxidation of emodinanthrone to emodin. Emodin is further modified to yield monodictyphenone via several steps involving CPUR_05427, CPUR_05428, CPUR_05429 and CPUR_05430. The short chain dehydrogenase/reductase CPUR_05418 then catalyzes the C-5 ketoreduction to give the xanthone skeleton of the monomeric units. Ergochromes formation requires further dimerization steps of different xanthone units, probably catalyzed by the cytochrome P450 monooxygenase CPUR_05419. CPUR_05425, CPUR_05426 and CPUR_05431 are unique to Claviceps, thus it is likely that they are involved in further modification of xanthone units or in their dimerization. The yellow ergochromes and the red anthraquinone pigments endocrocin and clavorubin are products from the same PKS derived precursors and the latter are likely shunt products in the pathway of xanthone biosynthesis. It is proposed that atrochrysone carboxylic acid released from the PKS CPUR_05437 can also be converted to endocrocin anthrone which is further oxidized into endocrocin by CPUR_05435. Endocrocin could be then modified to clavorubin, possibly by CPUR_05423 and CPUR_05431. Clavorubin is the principal anthraquinone metabolite produced by the cluster with a much higher yield compared to endocrocin. The protein is Short chain dehydrogenase/reductase CPUR_05418 of Claviceps purpurea (strain 20.1) (Ergot fungus).